The following is a 125-amino-acid chain: Acyl carrier protein, mitochondrial (125 aa).

Residues 1-36 (MFRSVCRISSRVAPSAYRTIMGRSVMSNTILAQRFY) constitute a mitochondrion transit peptide. In terms of domain architecture, Carrier spans 43–122 (DQVSQRVIDV…ETVDYIASNP (80 aa)). Ser82 carries the post-translational modification O-(pantetheine 4'-phosphoryl)serine.

Belongs to the acyl carrier protein (ACP) family. As to quaternary structure, complex I is composed of about 30 different subunits. In terms of processing, 4'-phosphopantetheine is transferred from CoA to a specific serine of apo-ACP by acpS. This modification is essential for activity because fatty acids are bound in thioester linkage to the sulfhydryl of the prosthetic group.

It is found in the mitochondrion. It functions in the pathway lipid metabolism; fatty acid biosynthesis. Its function is as follows. Carrier of the growing fatty acid chain in fatty acid biosynthesis. May be involved in the synthesis of very-long-chain fatty acids. Accessory and non-catalytic subunit of the mitochondrial membrane respiratory chain NADH dehydrogenase (Complex I), which functions in the transfer of electrons from NADH to the respiratory chain. The chain is Acyl carrier protein, mitochondrial (ACP1) from Saccharomyces cerevisiae (strain ATCC 204508 / S288c) (Baker's yeast).